A 108-amino-acid polypeptide reads, in one-letter code: X antigen family member 5 (108 aa).

Positions 20-108 (VGPMLEPSVP…PEGGEGKPQL (89 aa)) are disordered. Basic and acidic residues-rich tracts occupy residues 40–52 (SQDH…REDD) and 94–108 (EQFK…KPQL).

It belongs to the GAGE family.

This Homo sapiens (Human) protein is X antigen family member 5 (XAGE5).